A 377-amino-acid chain; its full sequence is Flap endonuclease 1 (377 aa).

The segment at methionine 1 to arginine 104 is N-domain. Aspartate 34 contributes to the Mg(2+) binding site. Residues arginine 47 and arginine 70 each contribute to the DNA site. Positions 86, 158, 160, 179, and 181 each coordinate Mg(2+). The segment at asparagine 122–histidine 253 is I-domain. Glutamate 158 is a binding site for DNA. Residues glycine 231 and aspartate 233 each contribute to the DNA site. Residue aspartate 233 coordinates Mg(2+). The tract at residues threonine 336–phenylalanine 344 is interaction with PCNA. The interval glutamine 337–lysine 377 is disordered. The segment covering glutamine 363–lysine 377 has biased composition (basic residues).

It belongs to the XPG/RAD2 endonuclease family. FEN1 subfamily. As to quaternary structure, interacts with PCNA. Three molecules of FEN1 bind to one PCNA trimer with each molecule binding to one PCNA monomer. PCNA stimulates the nuclease activity without altering cleavage specificity. The cofactor is Mg(2+). Post-translationally, phosphorylated. Phosphorylation upon DNA damage induces relocalization to the nuclear plasma.

The protein resides in the nucleus. It localises to the nucleolus. Its subcellular location is the nucleoplasm. It is found in the mitochondrion. Its function is as follows. Structure-specific nuclease with 5'-flap endonuclease and 5'-3' exonuclease activities involved in DNA replication and repair. During DNA replication, cleaves the 5'-overhanging flap structure that is generated by displacement synthesis when DNA polymerase encounters the 5'-end of a downstream Okazaki fragment. It enters the flap from the 5'-end and then tracks to cleave the flap base, leaving a nick for ligation. Also involved in the long patch base excision repair (LP-BER) pathway, by cleaving within the apurinic/apyrimidinic (AP) site-terminated flap. Acts as a genome stabilization factor that prevents flaps from equilibrating into structures that lead to duplications and deletions. Also possesses 5'-3' exonuclease activity on nicked or gapped double-stranded DNA, and exhibits RNase H activity. Also involved in replication and repair of rDNA and in repairing mitochondrial DNA. In Nematostella vectensis (Starlet sea anemone), this protein is Flap endonuclease 1.